Reading from the N-terminus, the 410-residue chain is Aspartic proteinase Asp1 (410 aa).

The N-terminal stretch at 1 to 23 is a signal peptide; it reads MTARLALLASLLLLLQLVPPSSA. A propeptide spans 24 to 46 (removed in mature form); the sequence is VVLELHGNVYPIGHFFITMNIGD. The Peptidase A1 domain occupies 38-392; that stretch reads FFITMNIGDP…DSERSLLGWV (355 aa). Catalysis depends on residues D56 and D257.

This sequence belongs to the peptidase A1 family.

This chain is Aspartic proteinase Asp1 (ASP1), found in Oryza sativa subsp. japonica (Rice).